The sequence spans 477 residues: Tripartite motif-containing protein 72 (477 aa).

Zn(2+)-binding residues include cysteine 14, cysteine 17, cysteine 29, histidine 31, cysteine 34, cysteine 37, cysteine 53, cysteine 56, cysteine 86, histidine 89, cysteine 97, aspartate 100, cysteine 105, cysteine 108, histidine 114, and histidine 117. The segment at 14–57 (CPLCLQLFDAPVTAECGHSFCRACLSRVAGEPAADGTVNCPCCQ) adopts an RING-type zinc-finger fold. Residues 81–122 (VPQGHCEEHLDPLSIYCEQDRVLVCGVCASLGSHRGHRLLPA) form a B box-type zinc finger. Residues 135-232 (QQKLQLQEAS…EKVLEEVADK (98 aa)) are a coiled coil. At serine 255 the chain carries Phosphoserine. In terms of domain architecture, B30.2/SPRY spans 271–475 (DFKFQVWRKM…PLLLVGPDGQ (205 aa)).

Belongs to the TRIM/RBCC family. As to quaternary structure, homodimer. Homooligomer; disulfide-linked. Oligomerizes on the phospholipid membrane. Interacts with DYSF and CAV3. In terms of processing, disulfide bond formation at Cys-242 occurs in case of membrane damage that cause the entry of the oxidized milieu of the extracellular space, resulting in homooligomerization. In terms of tissue distribution, muscle-specific.

It localises to the cell membrane. Its subcellular location is the sarcolemma. The protein resides in the cytoplasmic vesicle membrane. The enzyme catalyses S-ubiquitinyl-[E2 ubiquitin-conjugating enzyme]-L-cysteine + [acceptor protein]-L-lysine = [E2 ubiquitin-conjugating enzyme]-L-cysteine + N(6)-ubiquitinyl-[acceptor protein]-L-lysine.. It participates in protein modification; protein ubiquitination. With respect to regulation, specifically binds phosphatidylserine. The binding to phospholipids enhances ubiquitination activity. In terms of biological role, muscle-specific E3 ubiquitin-protein ligase that plays a central role in cell membrane repair by nucleating the assembly of the repair machinery at injury sites. Its ubiquitination activity is mediated by E2 ubiquitin-conjugating enzymes UBE2D1, UBE2D2 and UBE2D3. Acts as a sensor of oxidation: upon membrane damage, entry of extracellular oxidative environment results in disulfide bond formation and homooligomerization at the injury site. This oligomerization acts as a nucleation site for recruitment of TRIM72-containing vesicles to the injury site, leading to membrane patch formation. Probably acts upstream of the Ca(2+)-dependent membrane resealing process. Required for transport of DYSF to sites of cell injury during repair patch formation. Regulates membrane budding and exocytosis. May be involved in the regulation of the mobility of KCNB1-containing endocytic vesicles. The protein is Tripartite motif-containing protein 72 of Oryctolagus cuniculus (Rabbit).